The primary structure comprises 567 residues: MASSALICDTEQWKGLQAHVGEIQKTHLRHLMHDVERCKAMTAEYEGIYLDYSRQRATGETMEKLFKLAEAAKLKEKIEKMFRGDKINSTENRSVLHVALRAPRDEVINSNGVNVVPEVWGVKDKIKQFSETFRSGSWVGATGKALTNVVSVGIGGSFLGPLFVHAALQTDPEAAESAKGRQLRFLANVDPVDVARSIKDLDPETTLVVVVSKTFTTAETMLNARTLKEWIVSSLGPDAVAKHMIAVSTNLELVEKFGIDPKNAFAFWDWVGGRYSVCSAVGVLPLSLQYGFPIVQKFLEGAASIDKHFRSSSFEKNIPVLLGLLSVWNVSFLGYPARAILPYSQALEKFAPHIQQLSMESNGKGVSIDGVQLPFESGEIDFGEPGTNGQHSFYQLIHQGRVIPCDFIGVVKSQQPVYLKGEIVSNHDELMSNFFAQPDALAYGKTPEQLHSEKVPEHLIPHKTFQGNRPSLSLLLPSLSAYEIGQLLAIYEHRIAVQGFLWGINSFDQWGVELGKSLASQVRKSLHASRVEGKPVLGFNSSTTSLLTRYLAVEPSTPYNTTTLPKV.

D-glucose 6-phosphate contacts are provided by residues 156 to 157 (GS), 212 to 217 (SKTFTT), glutamine 356, glutamate 360, histidine 391, and lysine 516. Catalysis depends on glutamate 360, which acts as the Proton donor. Catalysis depends on residues histidine 391 and lysine 516.

Belongs to the GPI family. As to quaternary structure, homodimer.

It is found in the cytoplasm. It catalyses the reaction alpha-D-glucose 6-phosphate = beta-D-fructose 6-phosphate. The protein operates within carbohydrate degradation; glycolysis; D-glyceraldehyde 3-phosphate and glycerone phosphate from D-glucose: step 2/4. Catalyzes the conversion of glucose-6-phosphate to fructose-6-phosphate, the second step in glycolysis, and the reverse reaction during gluconeogenesis. The protein is Glucose-6-phosphate isomerase, cytosolic A of Oryza sativa subsp. japonica (Rice).